Consider the following 154-residue polypeptide: Crossover junction endodeoxyribonuclease RuvC (154 aa).

Catalysis depends on residues D7, E67, and D139. Mg(2+) contacts are provided by D7, E67, and D139.

Belongs to the RuvC family. As to quaternary structure, homodimer which binds Holliday junction (HJ) DNA. The HJ becomes 2-fold symmetrical on binding to RuvC with unstacked arms; it has a different conformation from HJ DNA in complex with RuvA. In the full resolvosome a probable DNA-RuvA(4)-RuvB(12)-RuvC(2) complex forms which resolves the HJ. Mg(2+) is required as a cofactor.

It localises to the cytoplasm. It catalyses the reaction Endonucleolytic cleavage at a junction such as a reciprocal single-stranded crossover between two homologous DNA duplexes (Holliday junction).. Functionally, the RuvA-RuvB-RuvC complex processes Holliday junction (HJ) DNA during genetic recombination and DNA repair. Endonuclease that resolves HJ intermediates. Cleaves cruciform DNA by making single-stranded nicks across the HJ at symmetrical positions within the homologous arms, yielding a 5'-phosphate and a 3'-hydroxyl group; requires a central core of homology in the junction. The consensus cleavage sequence is 5'-(A/T)TT(C/G)-3'. Cleavage occurs on the 3'-side of the TT dinucleotide at the point of strand exchange. HJ branch migration catalyzed by RuvA-RuvB allows RuvC to scan DNA until it finds its consensus sequence, where it cleaves and resolves the cruciform DNA. The protein is Crossover junction endodeoxyribonuclease RuvC of Parasynechococcus marenigrum (strain WH8102).